Reading from the N-terminus, the 206-residue chain is Large ribosomal subunit protein uL4 (206 aa).

Residues 47–94 (NRAQKGRSEIAKSTRKPFRQKGTGNARAGMASSPLWRGGGKIFPNSPD) form a disordered region.

This sequence belongs to the universal ribosomal protein uL4 family. As to quaternary structure, part of the 50S ribosomal subunit.

One of the primary rRNA binding proteins, this protein initially binds near the 5'-end of the 23S rRNA. It is important during the early stages of 50S assembly. It makes multiple contacts with different domains of the 23S rRNA in the assembled 50S subunit and ribosome. Its function is as follows. Forms part of the polypeptide exit tunnel. The sequence is that of Large ribosomal subunit protein uL4 from Azoarcus sp. (strain BH72).